The sequence spans 815 residues: uncharacterized protein (815 aa).

An N-terminal signal peptide occupies residues 1 to 21; the sequence is MNIYRLSFVSCLVMAMPCAMA. Cysteines 795 and 814 form a disulfide.

The protein belongs to the fimbrial export usher family.

It localises to the cell outer membrane. In terms of biological role, could be involved in the export and assembly of the putative YbgD fimbrial subunit across the outer membrane. This is an uncharacterized protein from Escherichia coli (strain K12).